Consider the following 982-residue polypeptide: Ubiquitin carboxyl-terminal hydrolase 15 (982 aa).

In terms of domain architecture, DUSP spans 7–118; sequence VDLETQRSEV…SQQPIARKVV (112 aa). The USP domain occupies 288-933; the sequence is CGLSNLGNTC…AAYVLFYQRQ (646 aa). Catalysis depends on Cys-297, which acts as the Nucleophile. The tract at residues 623-695 is disordered; that stretch reads TEENDGSLHC…DNDSENGLCT (73 aa). Over residues 655-672 the composition is skewed to acidic residues; sequence METDEPDDESSQDQELPS. His-891 functions as the Proton acceptor in the catalytic mechanism. Positions 950–982 are disordered; sequence QGASAATGAPHESDEESNEDENDIENENCMHTN. Residues 962–975 are compositionally biased toward acidic residues; the sequence is SDEESNEDENDIEN.

Belongs to the peptidase C19 family.

The protein localises to the cytoplasm. It is found in the nucleus. It carries out the reaction Thiol-dependent hydrolysis of ester, thioester, amide, peptide and isopeptide bonds formed by the C-terminal Gly of ubiquitin (a 76-residue protein attached to proteins as an intracellular targeting signal).. In terms of biological role, hydrolase that removes conjugated ubiquitin from target proteins and regulates various pathways such as the TGF-beta receptor signaling and NF-kappa-B pathways. Acts as a key regulator of TGF-beta receptor signaling pathway, but the precise mechanism is still unclear: according to a report, acts by promoting deubiquitination of monoubiquitinated R-SMADs, thereby alleviating inhibition of R-SMADs and promoting activation of TGF-beta target genes. According to another reports, regulates the TGF-beta receptor signaling pathway by mediating deubiquitination and stabilization of tgfbr1, leading to an enhanced TGF-beta signal. May also regulate gene expression and/or DNA repair through the deubiquitination of histone H2B. Involved in endosome organization by mediating deubiquitination of rnf26 target(s), releasing vesicles that are restrained in the perinuclear region. The chain is Ubiquitin carboxyl-terminal hydrolase 15 (usp15) from Xenopus tropicalis (Western clawed frog).